The sequence spans 76 residues: Acyl carrier protein (76 aa).

A Carrier domain is found at 1-76 (MALLDDVKAV…DAIKYIENNA (76 aa)). S36 is modified (O-(pantetheine 4'-phosphoryl)serine).

It belongs to the acyl carrier protein (ACP) family. In terms of processing, 4'-phosphopantetheine is transferred from CoA to a specific serine of apo-ACP by AcpS. This modification is essential for activity because fatty acids are bound in thioester linkage to the sulfhydryl of the prosthetic group.

The protein resides in the cytoplasm. Its pathway is lipid metabolism; fatty acid biosynthesis. Its function is as follows. Carrier of the growing fatty acid chain in fatty acid biosynthesis. The chain is Acyl carrier protein from Aliarcobacter butzleri (strain RM4018) (Arcobacter butzleri).